A 146-amino-acid chain; its full sequence is Protein E6 (146 aa).

2 zinc fingers span residues 27–63 and 100–136; these read CVFCKNELTTEELLAFALKELSIVWRHNWPFGVCAPC and CHACSKPLSIQEKEHQVQAYIHFHYIAGQWTGRCCQC.

This sequence belongs to the papillomaviridae E6 protein family. As to quaternary structure, forms homodimers. Interacts with ubiquitin-protein ligase UBE3A/E6-AP; this interaction stimulates UBE3A ubiquitin activity. Interacts with host TP53 and EP300; this interaction inhibits TP53 activity.

Its subcellular location is the host cytoplasm. It localises to the host nucleus. Its function is as follows. Plays a major role in the induction and maintenance of cellular transformation. E6 associates with host UBE3A/E6-AP ubiquitin-protein ligase and modulates its activity. Sequesters tumor suppressor TP53 in the host cytoplasm and modulates its activity by interacting with host EP300 that results in the reduction of TP53 acetylation and activation. In turn, apoptosis induced by DNA damage is inhibited. E6 also protects host keratinocytes from apoptosis by mediating the degradation of host BAK1. May also inhibit host immune response. The polypeptide is Protein E6 (Human papillomavirus type 61).